We begin with the raw amino-acid sequence, 143 residues long: Large ribosomal subunit protein uL16 (143 aa).

Residues 1 to 17 are compositionally biased toward basic residues; sequence MLQPKKTKFRRSQKGRM. The disordered stretch occupies residues 1–25; sequence MLQPKKTKFRRSQKGRMKGNAQRGN.

The protein belongs to the universal ribosomal protein uL16 family. Part of the 50S ribosomal subunit.

Functionally, binds 23S rRNA and is also seen to make contacts with the A and possibly P site tRNAs. This Azobacteroides pseudotrichonymphae genomovar. CFP2 protein is Large ribosomal subunit protein uL16.